Consider the following 106-residue polypeptide: Valine dehydrogenase (106 aa).

K91 is a catalytic residue.

Belongs to the Glu/Leu/Phe/Val dehydrogenases family. In terms of assembly, homodimer.

It is found in the cytoplasm. It catalyses the reaction L-valine + NAD(+) + H2O = 3-methyl-2-oxobutanoate + NH4(+) + NADH + H(+). Its pathway is amino-acid degradation; L-valine degradation. Functionally, oxidative deamination of branched-chain amino acids. The catabolism of valine is the major source of fatty acid precursors for macrolide biosynthesis and a vital source of antibiotic precursors. The protein is Valine dehydrogenase (vdh) of Streptomyces ambofaciens.